Reading from the N-terminus, the 468-residue chain is uncharacterized protein (468 aa).

One can recognise an HTH gntR-type domain in the interval 1 to 69 (MKKYQQLAEQ…PQSGYYVAPQ (69 aa)). Lys312 is modified (N6-(pyridoxal phosphate)lysine).

This sequence in the C-terminal section; belongs to the class-I pyridoxal-phosphate-dependent aminotransferase family.

This is an uncharacterized protein from Escherichia coli (strain K12).